The primary structure comprises 159 residues: Neuroglobin (159 aa).

Residues 3–151 (KLSSKDKELI…VVASMSRGWA (149 aa)) form the Globin domain. Residues His-66 and His-98 each contribute to the heme b site.

The protein belongs to the globin family. In terms of assembly, monomer. Homodimers and homotetramers. Mainly monomeric but also detected as part of homodimers and homotetramers.

It localises to the cytoplasm. It is found in the cytosol. The protein localises to the mitochondrion matrix. The enzyme catalyses Fe(III)-heme b-[protein] + nitric oxide + H2O = Fe(II)-heme b-[protein] + nitrite + 2 H(+). In terms of biological role, monomeric globin with a bis-histidyl six-coordinate heme-iron atom through which it can bind dioxygen, carbon monoxide and nitric oxide. Could help transport oxygen and increase its availability to the metabolically active neuronal tissues, though its low quantity in tissues as well as its high affinity for dioxygen, which may limit its oxygen-releasing ability, argue against it. The ferrous/deoxygenated form exhibits a nitrite reductase activity and it could produce nitric oxide which in turn inhibits cellular respiration in response to hypoxia. In its ferrous/deoxygenated state, it may also exhibit GDI (Guanine nucleotide Dissociation Inhibitor) activity toward heterotrimeric G-alpha proteins, thereby regulating signal transduction to facilitate neuroprotective responses in the wake of hypoxia and associated oxidative stress. This chain is Neuroglobin (ngb), found in Tetraodon nigroviridis (Spotted green pufferfish).